Reading from the N-terminus, the 461-residue chain is A-type ATP synthase subunit B (461 aa).

This sequence belongs to the ATPase alpha/beta chains family. In terms of assembly, has multiple subunits with at least A(3), B(3), C, D, E, F, H, I and proteolipid K(x).

The protein resides in the cell membrane. In terms of biological role, component of the A-type ATP synthase that produces ATP from ADP in the presence of a proton gradient across the membrane. The B chain is a regulatory subunit. In Methanoculleus marisnigri (strain ATCC 35101 / DSM 1498 / JR1), this protein is A-type ATP synthase subunit B.